Consider the following 590-residue polypeptide: Mannosyl-oligosaccharide 1,2-alpha-mannosidase mans-2 (590 aa).

Residues 1-9 (MKTVRFNKQ) lie on the Cytoplasmic side of the membrane. Residues 10 to 30 (ALAILAACFIFLLCVVCYFSA) form a helical; Signal-anchor for type II membrane protein membrane-spanning segment. At 31–590 (SSESHNAVVV…EAHPVPVLTN (560 aa)) the chain is on the lumenal side. Residues 88-102 (PARVESKPPGEKTST) show a composition bias toward basic and acidic residues. The segment at 88–112 (PARVESKPPGEKTSTEPEETGVGKA) is disordered. N-linked (GlcNAc...) asparagine glycans are attached at residues N156, N212, N373, and N402. Residues C423 and C456 are joined by a disulfide bond. Catalysis depends on E470, which acts as the Proton donor. Position 580 (T580) interacts with Ca(2+).

The protein belongs to the glycosyl hydrolase 47 family. Ca(2+) is required as a cofactor.

The protein resides in the membrane. It carries out the reaction N(4)-(alpha-D-Man-(1-&gt;2)-alpha-D-Man-(1-&gt;2)-alpha-D-Man-(1-&gt;3)-[alpha-D-Man-(1-&gt;2)-alpha-D-Man-(1-&gt;3)-[alpha-D-Man-(1-&gt;2)-alpha-D-Man-(1-&gt;6)]-alpha-D-Man-(1-&gt;6)]-beta-D-Man-(1-&gt;4)-beta-D-GlcNAc-(1-&gt;4)-beta-D-GlcNAc)-L-asparaginyl-[protein] (N-glucan mannose isomer 9A1,2,3B1,2,3) + 4 H2O = N(4)-(alpha-D-Man-(1-&gt;3)-[alpha-D-Man-(1-&gt;3)-[alpha-D-Man-(1-&gt;6)]-alpha-D-Man-(1-&gt;6)]-beta-D-Man-(1-&gt;4)-beta-D-GlcNAc-(1-&gt;4)-beta-D-GlcNAc)-L-asparaginyl-[protein] (N-glucan mannose isomer 5A1,2) + 4 beta-D-mannose. It catalyses the reaction N(4)-(alpha-D-Man-(1-&gt;2)-alpha-D-Man-(1-&gt;2)-alpha-D-Man-(1-&gt;3)-[alpha-D-Man-(1-&gt;3)-[alpha-D-Man-(1-&gt;2)-alpha-D-Man-(1-&gt;6)]-alpha-D-Man-(1-&gt;6)]-beta-D-Man-(1-&gt;4)-beta-D-GlcNAc-(1-&gt;4)-beta-D-GlcNAc)-L-asparaginyl-[protein] (N-glucan mannose isomer 8A1,2,3B1,3) + 3 H2O = N(4)-(alpha-D-Man-(1-&gt;3)-[alpha-D-Man-(1-&gt;3)-[alpha-D-Man-(1-&gt;6)]-alpha-D-Man-(1-&gt;6)]-beta-D-Man-(1-&gt;4)-beta-D-GlcNAc-(1-&gt;4)-beta-D-GlcNAc)-L-asparaginyl-[protein] (N-glucan mannose isomer 5A1,2) + 3 beta-D-mannose. Its pathway is protein modification; protein glycosylation. Functionally, involved in the maturation of Asn-linked oligosaccharides. Progressively trim alpha-1,2-linked mannose residues from Man(9)GlcNAc(2) to produce Man(5)GlcNAc(2). This chain is Mannosyl-oligosaccharide 1,2-alpha-mannosidase mans-2, found in Caenorhabditis elegans.